A 635-amino-acid polypeptide reads, in one-letter code: Threonine--tRNA ligase (635 aa).

Positions 1-61 constitute a TGS domain; it reads MPVIRLPDGS…TDDADLSIIT (61 aa). Residues 242–533 are catalytic; that stretch reads DHRKLGRQLD…LIENYAGAMP (292 aa). 3 residues coordinate Zn(2+): Cys-333, His-384, and His-510.

Belongs to the class-II aminoacyl-tRNA synthetase family. In terms of assembly, homodimer. Requires Zn(2+) as cofactor.

It localises to the cytoplasm. The enzyme catalyses tRNA(Thr) + L-threonine + ATP = L-threonyl-tRNA(Thr) + AMP + diphosphate + H(+). Its function is as follows. Catalyzes the attachment of threonine to tRNA(Thr) in a two-step reaction: L-threonine is first activated by ATP to form Thr-AMP and then transferred to the acceptor end of tRNA(Thr). Also edits incorrectly charged L-seryl-tRNA(Thr). In Methylobacillus flagellatus (strain ATCC 51484 / DSM 6875 / VKM B-1610 / KT), this protein is Threonine--tRNA ligase.